The sequence spans 739 residues: Cellulose synthase catalytic subunit [UDP-forming] (739 aa).

4 consecutive transmembrane segments (helical) span residues V36–A55, L59–L76, L83–F101, and M116–V138. Residues E157–V250 are catalytic subdomain A. The active site involves D199. Substrate-binding residues include D246 and D248. The tract at residues E327–M387 is catalytic subdomain B. Residue D343 is part of the active site. 4 consecutive transmembrane segments (helical) span residues F417–F436, I440–T462, P524–G546, and A551–A573. Residues Q580–S677 form the PilZ domain.

The protein belongs to the glycosyltransferase 2 family. Mg(2+) serves as cofactor.

Its subcellular location is the cell inner membrane. It carries out the reaction [(1-&gt;4)-beta-D-glucosyl](n) + UDP-alpha-D-glucose = [(1-&gt;4)-beta-D-glucosyl](n+1) + UDP + H(+). The protein operates within glycan metabolism; bacterial cellulose biosynthesis. Activated by bis-(3'-5') cyclic diguanylic acid (c-di-GMP). Its function is as follows. Catalytic subunit of cellulose synthase. It polymerizes uridine 5'-diphosphate glucose to cellulose, which is produced as an extracellular component responsible for the structural integrity and rigidity of self-supporting mats characteristic of the 'wrinkly spreader' phenotype. This is Cellulose synthase catalytic subunit [UDP-forming] (bcsA) from Pseudomonas fluorescens (strain SBW25).